We begin with the raw amino-acid sequence, 118 residues long: Protein BEX4 (118 aa).

The tract at residues 14-50 (VEKDKKNKKGGKASKQSEEESHHLEEVENKKPGGNVR) is disordered. Residues 28–44 (KQSEEESHHLEEVENKK) are compositionally biased toward basic and acidic residues. The interaction with SIRT2 stretch occupies residues 30–88 (SEEESHHLEEVENKKPGGNVRRKVRRLVPNFLWAIPNRHVDHSEGGEEVGRFVGQVMEA). The segment at 30–118 (SEEESHHLEE…DNHYDFCLIP (89 aa)) is interaction with alpha-tubulin. Residue Cys115 coordinates Zn(2+).

The protein belongs to the BEX family. Interacts with alpha-tubulin. Interacts with SIRT2. In terms of processing, ubiquitinated and degraded by the proteasome.

It is found in the cytoplasm. Its subcellular location is the cytoskeleton. It localises to the spindle pole. The protein localises to the nucleus. Its function is as follows. May play a role in microtubule deacetylation by negatively regulating the SIRT2 deacetylase activity toward alpha-tubulin and thereby participate in the control of cell cycle progression and genomic stability. In absence of reductive stress, acts as a pseudosubstrate for the CRL2(FEM1B) complex: associates with FEM1B via zinc, thereby preventing association between FEM1B and its substrates. In Rattus norvegicus (Rat), this protein is Protein BEX4.